Consider the following 182-residue polypeptide: Bifunctional protein PyrR (182 aa).

The short motif at I99 to T111 is the PRPP-binding element.

Belongs to the purine/pyrimidine phosphoribosyltransferase family. PyrR subfamily. Homodimer and homohexamer; in equilibrium.

It catalyses the reaction UMP + diphosphate = 5-phospho-alpha-D-ribose 1-diphosphate + uracil. In terms of biological role, regulates transcriptional attenuation of the pyrimidine nucleotide (pyr) operon by binding in a uridine-dependent manner to specific sites on pyr mRNA. This disrupts an antiterminator hairpin in the RNA and favors formation of a downstream transcription terminator, leading to a reduced expression of downstream genes. Also displays a weak uracil phosphoribosyltransferase activity which is not physiologically significant. The polypeptide is Bifunctional protein PyrR (Caldicellulosiruptor saccharolyticus (strain ATCC 43494 / DSM 8903 / Tp8T 6331)).